We begin with the raw amino-acid sequence, 526 residues long: ATP synthase subunit alpha (526 aa).

171-178 (GDRQTGKT) contacts ATP.

Belongs to the ATPase alpha/beta chains family. As to quaternary structure, F-type ATPases have 2 components, CF(1) - the catalytic core - and CF(0) - the membrane proton channel. CF(1) has five subunits: alpha(3), beta(3), gamma(1), delta(1), epsilon(1). CF(0) has three main subunits: a(1), b(2) and c(9-12). The alpha and beta chains form an alternating ring which encloses part of the gamma chain. CF(1) is attached to CF(0) by a central stalk formed by the gamma and epsilon chains, while a peripheral stalk is formed by the delta and b chains.

The protein localises to the cell inner membrane. It carries out the reaction ATP + H2O + 4 H(+)(in) = ADP + phosphate + 5 H(+)(out). In terms of biological role, produces ATP from ADP in the presence of a proton gradient across the membrane. The alpha chain is a regulatory subunit. The polypeptide is ATP synthase subunit alpha (Cytophaga hutchinsonii (strain ATCC 33406 / DSM 1761 / CIP 103989 / NBRC 15051 / NCIMB 9469 / D465)).